We begin with the raw amino-acid sequence, 1191 residues long: Serine/threonine-protein kinase dkf-2 (1191 aa).

Disordered regions lie at residues 11–48 (YTSM…TTTS) and 108–155 (MLSR…GGHV). The segment covering 123-139 (TPDDHYSNPSDKRREVP) has biased composition (basic and acidic residues). A compositionally biased stretch (low complexity) spans 140–150 (SIRSTSSNSSS). 2 consecutive Phorbol-ester/DAG-type zinc fingers follow at residues 314–364 (PHTL…PNNC) and 466–531 (PHTF…AKDC). The segment at 549–594 (VSEDRDDDLSLRSGSGGHKKAQNTPSAPLQGSEGSGSPGGAVVSFA) is disordered. Residues 632–713 (LLKEGWIVHY…VYFVYSSLTD (82 aa)) form the PH domain. The segment at 730–786 (PSTVSSTDSGYLGSSGASSSCVRSREGSTVSSTITVDRTRRGGSTTSTENSEAESES) is disordered. Residues 738-751 (SGYLGSSGASSSCV) are compositionally biased toward low complexity. Residues 756 to 765 (GSTVSSTITV) show a composition bias toward polar residues. Over residues 773–786 (STTSTENSEAESES) the composition is skewed to low complexity. Residues 891–1147 (IFAEEVLGSG…VAKAQSHIWM (257 aa)) form the Protein kinase domain. ATP is bound by residues 897 to 905 (LGSGQFGTV) and lysine 920. Catalysis depends on aspartate 1014, which acts as the Proton acceptor. Phosphoserine is present on residues serine 1046 and serine 1050.

This sequence belongs to the protein kinase superfamily. CAMK Ser/Thr protein kinase family. PKD subfamily. Mg(2+) is required as a cofactor. Phosphorylation on Ser-1046 is the dominant regulator of catalysis, phosphorylation on Ser-1050 has a lesser effect. Prolonged phosphorylation results in ubiquitination and degradation.

The protein resides in the cytoplasm. It localises to the membrane. It catalyses the reaction L-seryl-[protein] + ATP = O-phospho-L-seryl-[protein] + ADP + H(+). The catalysed reaction is L-threonyl-[protein] + ATP = O-phospho-L-threonyl-[protein] + ADP + H(+). Its activity is regulated as follows. Activated by DAG and phorbol esters. Phorbol-ester/DAG-type domain 1 binds phorbol ester with low affinity. Phorbol-ester/DAG-type domain 2 binds phorbol ester with high affinity and targets the kinase to the cell periphery, enabling phosphorylation and activation by colocalized tpa-1. Both domains 1 and 2 appear to bind DAG with equal affinity so may contribute equally to translocation and activation. Converts transient diacylglycerol (DAG) signals into prolonged physiological effects, downstream of PKC. Acts in the intestine to regulate both innate immunity by promoting activation of pmk-1 and also stress response and life span by acting as an upstream, negative regulator of the daf-16 transcription factor. In Caenorhabditis briggsae, this protein is Serine/threonine-protein kinase dkf-2.